We begin with the raw amino-acid sequence, 406 residues long: Protein ALP1-like (406 aa).

Positions lysine 8–lysine 15 match the Nuclear localization signal motif. The DDE Tnp4 domain occupies isoleucine 187 to asparagine 353. Aspartate 188, aspartate 240, and aspartate 279 together coordinate a divalent metal cation.

It belongs to the HARBI1 family. Requires a divalent metal cation as cofactor.

Its subcellular location is the nucleus. Its function is as follows. Transposase-derived protein that may have nuclease activity. The chain is Protein ALP1-like from Arabidopsis thaliana (Mouse-ear cress).